Here is a 55-residue protein sequence, read N- to C-terminus: uncharacterized protein (55 aa).

This is an uncharacterized protein from Orgyia pseudotsugata multicapsid polyhedrosis virus (OpMNPV).